The primary structure comprises 111 residues: uncharacterized protein (111 aa).

Helical transmembrane passes span 27–47 (IIVL…GYKF) and 80–100 (IFTG…ISAI).

The protein localises to the membrane. This is an uncharacterized protein from Acanthamoeba polyphaga (Amoeba).